Consider the following 335-residue polypeptide: Lipoyl synthase (335 aa).

Residues Cys55, Cys60, Cys66, Cys81, Cys85, Cys88, and Ser292 each contribute to the [4Fe-4S] cluster site. Residues 67–281 form the Radical SAM core domain; that stretch reads WEDREATFLI…SKAAEEIGFL (215 aa).

Belongs to the radical SAM superfamily. Lipoyl synthase family. It depends on [4Fe-4S] cluster as a cofactor.

It localises to the cytoplasm. It carries out the reaction [[Fe-S] cluster scaffold protein carrying a second [4Fe-4S](2+) cluster] + N(6)-octanoyl-L-lysyl-[protein] + 2 oxidized [2Fe-2S]-[ferredoxin] + 2 S-adenosyl-L-methionine + 4 H(+) = [[Fe-S] cluster scaffold protein] + N(6)-[(R)-dihydrolipoyl]-L-lysyl-[protein] + 4 Fe(3+) + 2 hydrogen sulfide + 2 5'-deoxyadenosine + 2 L-methionine + 2 reduced [2Fe-2S]-[ferredoxin]. The protein operates within protein modification; protein lipoylation via endogenous pathway; protein N(6)-(lipoyl)lysine from octanoyl-[acyl-carrier-protein]: step 2/2. Functionally, catalyzes the radical-mediated insertion of two sulfur atoms into the C-6 and C-8 positions of the octanoyl moiety bound to the lipoyl domains of lipoate-dependent enzymes, thereby converting the octanoylated domains into lipoylated derivatives. The chain is Lipoyl synthase from Kocuria rhizophila (strain ATCC 9341 / DSM 348 / NBRC 103217 / DC2201).